Here is a 523-residue protein sequence, read N- to C-terminus: MSAPHSALQAELDAAQSPYLAFRGIGKSFPGVLALDDISFTCQAGQIHALMGENGAGKSTLLKILSGNYTPTQGEIHIKGKAVNFTNTTDALDAGVAIIYQELHLVPEMTVAENIYLGQLPTKMGMVDRKLLRYESRIQLSHLGLDIDPDTPLKYLSIGQWQMVEIAKALARNAKIIAFDEPTSSLSAREIEQLFRVIRELRAEGRVILYVSHRMEEIFALSDAITVFKDGRYVRTFDDMTQVNNASLVQAMVGRNLGDIYGYQPREIGSERLTLQAVKAIGVASPISLTVHQGEIVGLFGLVGAGRSELLKGLFGDTKLTSGKLLLDGQPLTIRSPIDAISAGIMLCPEDRKADGIIPVHSVQDNINISARRKTLTAGCLINNRWEADNALLRIQSLNIKTPGPQQLIMNLSGGNQQKAILGRWLSEDMKVILLDEPTRGIDVGAKHEIYNVIYQLAKQGIAVLFASSDLPEVLGLADRIVVMREGAISGELDHEYATEEQALSLAMLRTPNIATNTASAVA.

ABC transporter domains are found at residues 20–255 (LAFR…MVGR) and 268–511 (IGSE…MLRT). 52–59 (GENGAGKS) contributes to the ATP binding site.

Belongs to the ABC transporter superfamily. Arabinose importer (TC 3.A.1.2.2) family. In terms of assembly, the complex is composed of two ATP-binding proteins (AraG), two transmembrane proteins (AraH) and a solute-binding protein (AraF).

It localises to the cell inner membrane. It carries out the reaction L-arabinose(out) + ATP + H2O = L-arabinose(in) + ADP + phosphate + H(+). Functionally, part of the ABC transporter complex AraFGH involved in arabinose import. Responsible for energy coupling to the transport system. This chain is Arabinose import ATP-binding protein AraG, found in Yersinia pestis bv. Antiqua (strain Antiqua).